Consider the following 501-residue polypeptide: L-arabinose isomerase (501 aa).

Positions 307, 334, 351, and 450 each coordinate Mn(2+).

Belongs to the arabinose isomerase family. It depends on Mn(2+) as a cofactor.

It carries out the reaction beta-L-arabinopyranose = L-ribulose. Its pathway is carbohydrate degradation; L-arabinose degradation via L-ribulose; D-xylulose 5-phosphate from L-arabinose (bacterial route): step 1/3. Catalyzes the conversion of L-arabinose to L-ribulose. The sequence is that of L-arabinose isomerase from Acidothermus cellulolyticus (strain ATCC 43068 / DSM 8971 / 11B).